The following is a 150-amino-acid chain: Large ribosomal subunit protein uL13 (150 aa).

The interval 130 to 150 (EHPHGAQQPQPYQLNPSASIK) is disordered. Positions 136-150 (QQPQPYQLNPSASIK) are enriched in polar residues.

It belongs to the universal ribosomal protein uL13 family. As to quaternary structure, part of the 50S ribosomal subunit.

In terms of biological role, this protein is one of the early assembly proteins of the 50S ribosomal subunit, although it is not seen to bind rRNA by itself. It is important during the early stages of 50S assembly. The protein is Large ribosomal subunit protein uL13 of Synechococcus sp. (strain RCC307).